Consider the following 166-residue polypeptide: Crossover junction endodeoxyribonuclease RuvC (166 aa).

Active-site residues include D7, E67, and D140. Mg(2+) contacts are provided by D7, E67, and D140.

The protein belongs to the RuvC family. In terms of assembly, homodimer which binds Holliday junction (HJ) DNA. The HJ becomes 2-fold symmetrical on binding to RuvC with unstacked arms; it has a different conformation from HJ DNA in complex with RuvA. In the full resolvosome a probable DNA-RuvA(4)-RuvB(12)-RuvC(2) complex forms which resolves the HJ. The cofactor is Mg(2+).

The protein localises to the cytoplasm. It catalyses the reaction Endonucleolytic cleavage at a junction such as a reciprocal single-stranded crossover between two homologous DNA duplexes (Holliday junction).. Its function is as follows. The RuvA-RuvB-RuvC complex processes Holliday junction (HJ) DNA during genetic recombination and DNA repair. Endonuclease that resolves HJ intermediates. Cleaves cruciform DNA by making single-stranded nicks across the HJ at symmetrical positions within the homologous arms, yielding a 5'-phosphate and a 3'-hydroxyl group; requires a central core of homology in the junction. The consensus cleavage sequence is 5'-(A/T)TT(C/G)-3'. Cleavage occurs on the 3'-side of the TT dinucleotide at the point of strand exchange. HJ branch migration catalyzed by RuvA-RuvB allows RuvC to scan DNA until it finds its consensus sequence, where it cleaves and resolves the cruciform DNA. This Ruminiclostridium cellulolyticum (strain ATCC 35319 / DSM 5812 / JCM 6584 / H10) (Clostridium cellulolyticum) protein is Crossover junction endodeoxyribonuclease RuvC.